Consider the following 300-residue polypeptide: MPWPAHCRHVTGEVGIYQTLKHKPLAEVRAAIRAGQYCSHTAGLGKGFLQANLAIMPEAYALDFMRYCQRNPKPCPLSGVSDTGNPMMTTMGGQIDIRTDVPAYNIYRDGRLAGSVTDIRDLWQDDFVAFALGCSFTFEHALQQAGIALWHIDNDKTVPMYRSGIDTVPAGPFRGKMVVSMRAIPEDRVAEAVEISRRFPLAHGAPVHWGDPAGLGITDLARPDWGDPVPVPEGHVPVFWACGVTPQVALEAASMPICITHKPGHMLISDIPEDAEIPILRPQDQHTSQTQQGETHDTHA.

This sequence belongs to the D-glutamate cyclase family.

This Dinoroseobacter shibae (strain DSM 16493 / NCIMB 14021 / DFL 12) protein is Putative hydro-lyase Dshi_3152.